The chain runs to 147 residues: Large ribosomal subunit protein uL15 (147 aa).

Residues 20–54 are disordered; the sequence is GRGIGSGKGKTSGKGHKGQKARGTGKVHPWFEGGQ. Residues 30-44 show a composition bias toward basic residues; it reads TSGKGHKGQKARGTG.

The protein belongs to the universal ribosomal protein uL15 family. In terms of assembly, part of the 50S ribosomal subunit.

Its function is as follows. Binds to the 23S rRNA. This chain is Large ribosomal subunit protein uL15, found in Thermosipho africanus (strain TCF52B).